A 1047-amino-acid polypeptide reads, in one-letter code: Ribonucleoside-diphosphate reductase subunit alpha (1047 aa).

3 ATP-cone domains span residues 9 to 111, 118 to 219, and 237 to 327; these read CTIV…KAHR, LSVV…ARVR, and VEVL…EALG. Residues threonine 442, 457–458, glycine 486, 670–674, and 857–861 contribute to the substrate site; these read SC, NLCTE, and PTATI. An intrachain disulfide couples cysteine 458 to cysteine 687. Asparagine 670 (proton acceptor) is an active-site residue. Catalysis depends on cysteine 672, which acts as the Cysteine radical intermediate. Catalysis depends on glutamate 674, which acts as the Proton acceptor.

The protein belongs to the ribonucleoside diphosphate reductase large chain family. In terms of assembly, tetramer of two alpha and two beta subunits.

It catalyses the reaction a 2'-deoxyribonucleoside 5'-diphosphate + [thioredoxin]-disulfide + H2O = a ribonucleoside 5'-diphosphate + [thioredoxin]-dithiol. Its activity is regulated as follows. Under complex allosteric control mediated by deoxynucleoside triphosphates and ATP binding. The type of nucleotide bound at the specificity site determines substrate preference. It seems probable that ATP makes the enzyme reduce CDP and UDP, dGTP favors ADP reduction and dTTP favors GDP reduction. Provides the precursors necessary for DNA synthesis. Catalyzes the biosynthesis of deoxyribonucleotides from the corresponding ribonucleotides. This chain is Ribonucleoside-diphosphate reductase subunit alpha (nrdA), found in Chlamydia trachomatis serovar D (strain ATCC VR-885 / DSM 19411 / UW-3/Cx).